A 216-amino-acid chain; its full sequence is MKLSTADSIFFFLPYEFINPIILLIPMATIIFAGRSNVGKSTLIYRLTGKKVRRGKRPGVTRKIIEIEWKNHKIIDMPGFGFMMGLPKEVQERIKDEIVHFIEDNAKNIDVAVLVVDGKAAPEIIKRWEKRGEIPIDVEFYQFLRELDIPTIVAVNKLDKIKNVQEVINFLAEKFEVPLSEIDKVFIPISAKFGDNIERLKNRIFEVIRERQGRRV.

The EngB-type G domain occupies 26–210 (PMATIIFAGR…KNRIFEVIRE (185 aa)). GTP contacts are provided by residues 34–41 (GRSNVGKS), 59–63 (GVTRK), 76–79 (DMPG), 156–159 (NKLD), and 189–191 (ISA). Mg(2+) is bound by residues S41 and T61.

Belongs to the TRAFAC class TrmE-Era-EngA-EngB-Septin-like GTPase superfamily. EngB GTPase family. The cofactor is Mg(2+).

In terms of biological role, necessary for normal cell division and for the maintenance of normal septation. The protein is Probable GTP-binding protein EngB of Pyrococcus horikoshii (strain ATCC 700860 / DSM 12428 / JCM 9974 / NBRC 100139 / OT-3).